A 451-amino-acid chain; its full sequence is Tol-Pal system protein TolB 1 (451 aa).

The first 19 residues, 1-19 (MTLRMLFAFALLAAAPAQA), serve as a signal peptide directing secretion. The span at 18–29 (QAQQTEPQPAEE) shows a compositional bias: low complexity. Disordered regions lie at residues 18-37 (QAQQ…GTVS) and 431-451 (NERR…PLLP).

This sequence belongs to the TolB family. In terms of assembly, the Tol-Pal system is composed of five core proteins: the inner membrane proteins TolA, TolQ and TolR, the periplasmic protein TolB and the outer membrane protein Pal. They form a network linking the inner and outer membranes and the peptidoglycan layer.

Its subcellular location is the periplasm. Its function is as follows. Part of the Tol-Pal system, which plays a role in outer membrane invagination during cell division and is important for maintaining outer membrane integrity. The sequence is that of Tol-Pal system protein TolB 1 from Novosphingobium aromaticivorans (strain ATCC 700278 / DSM 12444 / CCUG 56034 / CIP 105152 / NBRC 16084 / F199).